We begin with the raw amino-acid sequence, 21 residues long: 5-methyltetrahydropteroyltriglutamate--homocysteine methyltransferase (21 aa).

Belongs to the vitamin-B12 independent methionine synthase family. The cofactor is Zn(2+).

Its subcellular location is the cytoplasm. The enzyme catalyses 5-methyltetrahydropteroyltri-L-glutamate + L-homocysteine = tetrahydropteroyltri-L-glutamate + L-methionine. It participates in amino-acid biosynthesis; L-methionine biosynthesis via de novo pathway; L-methionine from L-homocysteine (MetE route): step 1/1. Its function is as follows. Catalyzes the transfer of a methyl group from 5-methyltetrahydrofolate to homocysteine resulting in methionine formation. The protein is 5-methyltetrahydropteroyltriglutamate--homocysteine methyltransferase of Populus euphratica (Euphrates poplar).